We begin with the raw amino-acid sequence, 195 residues long: Putative L(+)-tartrate dehydratase subunit beta (195 aa).

The active site involves histidine 36. Position 104 (lysine 104) interacts with substrate.

The protein belongs to the class-I fumarase family. In terms of assembly, heterotetramer of two alpha and two beta subunits.

It carries out the reaction (2R,3R)-tartrate = oxaloacetate + H2O. The chain is Putative L(+)-tartrate dehydratase subunit beta from Methanocaldococcus jannaschii (strain ATCC 43067 / DSM 2661 / JAL-1 / JCM 10045 / NBRC 100440) (Methanococcus jannaschii).